The primary structure comprises 114 residues: T cell receptor beta variable 4-2 (114 aa).

The signal sequence occupies residues 1 to 21 (MGCRLLCCAVLCLLGAVPMET). Residues 22–114 (GVTQTPRHLV…SALYLCASSQ (93 aa)) enclose the Ig-like domain. Cysteines 42 and 110 form a disulfide. Asn76 and Asn89 each carry an N-linked (GlcNAc...) asparagine glycan.

In terms of assembly, alpha-beta TR is a heterodimer composed of an alpha and beta chain; disulfide-linked. The alpha-beta TR is associated with the transmembrane signaling CD3 coreceptor proteins to form the TR-CD3 (TcR or TCR). The assembly of alpha-beta TR heterodimers with CD3 occurs in the endoplasmic reticulum where a single alpha-beta TR heterodimer associates with one CD3D-CD3E heterodimer, one CD3G-CD3E heterodimer and one CD247 homodimer forming a stable octameric structure. CD3D-CD3E and CD3G-CD3E heterodimers preferentially associate with TR alpha and TR beta chains, respectively. The association of the CD247 homodimer is the last step of TcR assembly in the endoplasmic reticulum and is required for transport to the cell surface.

The protein resides in the cell membrane. Functionally, v region of the variable domain of T cell receptor (TR) beta chain that participates in the antigen recognition. Alpha-beta T cell receptors are antigen specific receptors which are essential to the immune response and are present on the cell surface of T lymphocytes. Recognize peptide-major histocompatibility (MH) (pMH) complexes that are displayed by antigen presenting cells (APC), a prerequisite for efficient T cell adaptive immunity against pathogens. Binding of alpha-beta TR to pMH complex initiates TR-CD3 clustering on the cell surface and intracellular activation of LCK that phosphorylates the ITAM motifs of CD3G, CD3D, CD3E and CD247 enabling the recruitment of ZAP70. In turn ZAP70 phosphorylates LAT, which recruits numerous signaling molecules to form the LAT signalosome. The LAT signalosome propagates signal branching to three major signaling pathways, the calcium, the mitogen-activated protein kinase (MAPK) kinase and the nuclear factor NF-kappa-B (NF-kB) pathways, leading to the mobilization of transcription factors that are critical for gene expression and essential for T cell growth and differentiation. The T cell repertoire is generated in the thymus, by V-(D)-J rearrangement. This repertoire is then shaped by intrathymic selection events to generate a peripheral T cell pool of self-MH restricted, non-autoaggressive T cells. Post-thymic interaction of alpha-beta TR with the pMH complexes shapes TR structural and functional avidity. The sequence is that of T cell receptor beta variable 4-2 from Homo sapiens (Human).